A 697-amino-acid chain; its full sequence is Putative cryptochrome DASH (697 aa).

Positions 5-164 constitute a Photolyase/cryptochrome alpha/beta domain; the sequence is KLLVYLLRRD…GFKLWHDEKY (160 aa). Disordered regions lie at residues 170–215 and 554–697; these read DNGL…FPSW and FSVT…PPHI. Residues 188 to 198 show a composition bias toward basic and acidic residues; it reads KTQEPLRERPR. The segment covering 560-569 has biased composition (basic residues); that stretch reads RGNRRPYRWR. Over residues 578–590 the composition is skewed to gly residues; the sequence is GRGGRGGGTGNTS. Low complexity-rich tracts occupy residues 659-675 and 683-697; these read QQQQ…YAHQ and RQQQ…PPHI.

The protein belongs to the DNA photolyase class-1 family. Requires FAD as cofactor. (6R)-5,10-methylene-5,6,7,8-tetrahydrofolate is required as a cofactor.

In terms of biological role, may have a photoreceptor function. The sequence is that of Putative cryptochrome DASH from Gibberella zeae (strain ATCC MYA-4620 / CBS 123657 / FGSC 9075 / NRRL 31084 / PH-1) (Wheat head blight fungus).